Consider the following 259-residue polypeptide: Hydroxyethylthiazole kinase (259 aa).

Met-37 contacts substrate. 2 residues coordinate ATP: Arg-113 and Thr-158. Gly-185 serves as a coordination point for substrate.

The protein belongs to the Thz kinase family. The cofactor is Mg(2+).

It catalyses the reaction 5-(2-hydroxyethyl)-4-methylthiazole + ATP = 4-methyl-5-(2-phosphooxyethyl)-thiazole + ADP + H(+). Its pathway is cofactor biosynthesis; thiamine diphosphate biosynthesis; 4-methyl-5-(2-phosphoethyl)-thiazole from 5-(2-hydroxyethyl)-4-methylthiazole: step 1/1. In terms of biological role, catalyzes the phosphorylation of the hydroxyl group of 4-methyl-5-beta-hydroxyethylthiazole (THZ). The chain is Hydroxyethylthiazole kinase from Helicobacter pylori (strain ATCC 700392 / 26695) (Campylobacter pylori).